A 189-amino-acid chain; its full sequence is T cell receptor gamma constant 2 (189 aa).

The Ig-like domain occupies 10–104 (PKPTIFLPSI…NKNGIDQEII (95 aa)). A disulfide bridge links Cys-32 with Cys-88. Residues Asn-66, Asn-120, Asn-136, Asn-142, and Asn-151 are each glycosylated (N-linked (GlcNAc...) asparagine). A helical transmembrane segment spans residues 155-177 (YYTYLLLLLKSVVYFAIITCCLL).

As to quaternary structure, gamma-delta TR is a heterodimer composed of a gamma and delta chain; disulfide-linked. The gamma-delta TR is associated with the transmembrane signaling CD3 coreceptor proteins following the stoichiometry: a single gamma-delta TR heterodimer associates with one CD3D-CD3E heterodimer, one CD3G-CD3E heterodimer and one CD247 homodimer forming a stable octameric structure. Upon activation, gamma-delta TR complex associates with FCER1G to initiate intracellular signaling.

The protein resides in the cell membrane. Functionally, constant region of T cell receptor (TR) gamma chain that participates in the antigen recognition. Gamma-delta TRs recognize a variety of self and foreign non-peptide antigens frequently expressed at the epithelial boundaries between the host and external environment, including endogenous lipids presented by MH-like protein CD1D and phosphoantigens presented by butyrophilin-like molecule BTN3A1. Upon antigen recognition induces rapid, innate-like immune responses involved in pathogen clearance and tissue repair. Binding of gamma-delta TR complex to antigen triggers phosphorylation of immunoreceptor tyrosine-based activation motifs (ITAMs) in the CD3 chains by the LCK and FYN kinases, allowing the recruitment, phosphorylation, and activation of ZAP70 that facilitates phosphorylation of the scaffolding proteins LCP2 and LAT. This lead to the formation of a supramolecular signalosome that recruits the phospholipase PLCG1, resulting in calcium mobilization and ERK activation, ultimately leading to T cell expansion and differentiation into effector cells. Gamma-delta TRs are produced through somatic rearrangement of a limited repertoire of variable (V), diversity (D), and joining (J) genes. The potential diversity of gamma-delta TRs is conferred by the unique ability to rearrange (D) genes in tandem and to utilize all three reading frames. The combinatorial diversity is considerably increased by the sequence exonuclease trimming and random nucleotide (N) region additions which occur during the V-(D)-J rearrangements. The chain is T cell receptor gamma constant 2 from Homo sapiens (Human).